The primary structure comprises 264 residues: Glutamate racemase (264 aa).

Substrate is bound by residues 9-10 (DS) and 41-42 (YG). The Proton donor/acceptor role is filled by cysteine 72. Residue 73-74 (NT) coordinates substrate. The active-site Proton donor/acceptor is cysteine 183. 184-185 (TH) is a binding site for substrate.

This sequence belongs to the aspartate/glutamate racemases family.

It catalyses the reaction L-glutamate = D-glutamate. Its pathway is cell wall biogenesis; peptidoglycan biosynthesis. In terms of biological role, provides the (R)-glutamate required for cell wall biosynthesis. The chain is Glutamate racemase from Geobacillus kaustophilus (strain HTA426).